Reading from the N-terminus, the 190-residue chain is UPF0301 protein TC_0483 (190 aa).

The protein belongs to the UPF0301 (AlgH) family.

The chain is UPF0301 protein TC_0483 from Chlamydia muridarum (strain MoPn / Nigg).